Consider the following 197-residue polypeptide: Imidazoleglycerol-phosphate dehydratase (197 aa).

Belongs to the imidazoleglycerol-phosphate dehydratase family.

The protein resides in the cytoplasm. It catalyses the reaction D-erythro-1-(imidazol-4-yl)glycerol 3-phosphate = 3-(imidazol-4-yl)-2-oxopropyl phosphate + H2O. The protein operates within amino-acid biosynthesis; L-histidine biosynthesis; L-histidine from 5-phospho-alpha-D-ribose 1-diphosphate: step 6/9. In Methylococcus capsulatus (strain ATCC 33009 / NCIMB 11132 / Bath), this protein is Imidazoleglycerol-phosphate dehydratase.